A 309-amino-acid polypeptide reads, in one-letter code: ADP-L-glycero-D-manno-heptose-6-epimerase (309 aa).

NADP(+)-binding positions include 10–11 (FI), 31–32 (DN), K38, K53, 75–79 (EGACS), and N92. Residue Y140 is the Proton acceptor of the active site. Position 144 (K144) interacts with NADP(+). N169 lines the substrate pocket. NADP(+) is bound by residues V170 and K178. K178 serves as the catalytic Proton acceptor. Substrate-binding positions include S180, H187, 201-204 (FEGS), R209, and Y272.

Belongs to the NAD(P)-dependent epimerase/dehydratase family. HldD subfamily. As to quaternary structure, homopentamer. It depends on NADP(+) as a cofactor.

The enzyme catalyses ADP-D-glycero-beta-D-manno-heptose = ADP-L-glycero-beta-D-manno-heptose. It functions in the pathway nucleotide-sugar biosynthesis; ADP-L-glycero-beta-D-manno-heptose biosynthesis; ADP-L-glycero-beta-D-manno-heptose from D-glycero-beta-D-manno-heptose 7-phosphate: step 4/4. In terms of biological role, catalyzes the interconversion between ADP-D-glycero-beta-D-manno-heptose and ADP-L-glycero-beta-D-manno-heptose via an epimerization at carbon 6 of the heptose. In Enterobacter sp. (strain 638), this protein is ADP-L-glycero-D-manno-heptose-6-epimerase.